Here is a 276-residue protein sequence, read N- to C-terminus: Large ribosomal subunit protein uL2 (276 aa).

A disordered region spans residues 223–276 (AVMNPVDHPHGGGEGKNSVGRKSPLTPWGKPALGIKTRGRKTSDKFIVRRRNEK). The span at 263-276 (KTSDKFIVRRRNEK) shows a compositional bias: basic and acidic residues.

The protein belongs to the universal ribosomal protein uL2 family. Part of the 50S ribosomal subunit. Forms a bridge to the 30S subunit in the 70S ribosome.

Functionally, one of the primary rRNA binding proteins. Required for association of the 30S and 50S subunits to form the 70S ribosome, for tRNA binding and peptide bond formation. It has been suggested to have peptidyltransferase activity; this is somewhat controversial. Makes several contacts with the 16S rRNA in the 70S ribosome. The chain is Large ribosomal subunit protein uL2 from Fusobacterium nucleatum subsp. nucleatum (strain ATCC 25586 / DSM 15643 / BCRC 10681 / CIP 101130 / JCM 8532 / KCTC 2640 / LMG 13131 / VPI 4355).